Here is a 304-residue protein sequence, read N- to C-terminus: N-acetyl-D-glucosamine kinase (304 aa).

Residues 4 to 11 (GFDIGGTK) and 133 to 140 (GFGGGLIF) each bind ATP. Residues His157, Cys178, Cys180, and Cys185 each contribute to the Zn(2+) site.

It belongs to the ROK (NagC/XylR) family. NagK subfamily.

The catalysed reaction is N-acetyl-D-glucosamine + ATP = N-acetyl-D-glucosamine 6-phosphate + ADP + H(+). The protein operates within cell wall biogenesis; peptidoglycan recycling. Catalyzes the phosphorylation of N-acetyl-D-glucosamine (GlcNAc) derived from cell-wall degradation, yielding GlcNAc-6-P. This Mannheimia succiniciproducens (strain KCTC 0769BP / MBEL55E) protein is N-acetyl-D-glucosamine kinase.